Here is a 1320-residue protein sequence, read N- to C-terminus: Probable inactive ATP-dependent zinc metalloprotease FTSHI 5, chloroplastic (1320 aa).

Residues 1-43 constitute a chloroplast transit peptide; it reads MDFISASSLSSPFSTQLSPIYLSSGIVSLKPRHRVKNRNFGSR. A run of 3 helical transmembrane segments spans residues 571 to 591, 633 to 653, and 695 to 715; these read LYLK…WIPM, NIND…IIPY, and FQWF…LYHV. 824–831 is a binding site for ATP; the sequence is GERGTGKT.

It in the N-terminal section; belongs to the AAA ATPase family. This sequence in the C-terminal section; belongs to the peptidase M41 family. As to quaternary structure, oligomer.

The protein localises to the plastid. The protein resides in the chloroplast membrane. Its function is as follows. Required for plastid development during embryogenesis. Might be involved in chaperone functions or play a structural role in the thylakoid FtsH complex. The sequence is that of Probable inactive ATP-dependent zinc metalloprotease FTSHI 5, chloroplastic from Arabidopsis thaliana (Mouse-ear cress).